The following is a 703-amino-acid chain: Capsid vertex component 1 (703 aa).

Residues 200 to 246 (LGESASPRPQPLARPHAGAPADPPIVGASDPPISPEEQLTAPGGDTT) form a disordered region.

Belongs to the herpesviridae CVC1 protein family. Interacts (via C-terminus) with capsid vertex component 2/CVC2.

Its subcellular location is the virion. It localises to the host nucleus. Functionally, capsid vertex-specific component that plays a role during viral DNA encapsidation, assuring correct genome cleavage and presumably stabilizing capsids that contain full-length viral genomes. The chain is Capsid vertex component 1 from Human herpesvirus 1 (strain 17) (HHV-1).